The sequence spans 1414 residues: Phenyloxazoline synthase MbtB (1414 aa).

The 74-residue stretch at 5 to 78 folds into the Carrier 1 domain; that stretch reads TACSEIIRAE…AWSQLVSAGT (74 aa). At serine 39 the chain carries O-(pantetheine 4'-phosphoryl)serine. A condensation/cyclization region spans residues 96 to 394; it reads EGEPFPLAPM…SSLLLDVDLT (299 aa). The segment at 579 to 975 is adenylation; sequence SYAQLRDQAS…RLPGVHAAAA (397 aa). The Carrier 2 domain maps to 1057 to 1135; that stretch reads APRTVLQRAL…ALAQLLTGRE (79 aa). Serine 1094 carries the O-(pantetheine 4'-phosphoryl)serine modification. The segment at 1188–1413 is thioesterase; it reads GAVLVFPHAG…AVARMVSADV (226 aa).

This sequence belongs to the ATP-dependent AMP-binding enzyme family. MbtB subfamily. The cofactor is pantetheine 4'-phosphate. 4'-phosphopantetheine is transferred from CoA to a specific serine in each of the two carrier protein domains, leading to their activation from apo to holo forms.

The protein operates within siderophore biosynthesis; mycobactin biosynthesis. Its function is as follows. Involved in the initial steps of the mycobactin biosynthetic pathway. Putatively couples activated salicylic acid with serine or threonine and cyclizes this precursor to the hydroxyphenyloxazoline ring system present in this class of siderophores. Essential for growth in macrophages. The chain is Phenyloxazoline synthase MbtB (mbtB) from Mycobacterium tuberculosis (strain ATCC 25618 / H37Rv).